A 2113-amino-acid chain; its full sequence is Ninein (2113 aa).

EF-hand domains follow at residues 8-43 and 42-77; these read QHEA…LCLE and LEDV…ILSR. Residue Ser152 is modified to Phosphoserine. EF-hand domains follow at residues 182–217 and 219–252; these read WIEE…YGLQ and VDGA…TGKS. 245 to 252 provides a ligand contact to GTP; sequence GLFKTGKS. Residue Ser269 is modified to Phosphoserine. 300-304 contacts GTP; it reads DGMGQ. In terms of domain architecture, EF-hand 5 spans 317 to 352; sequence EGIENSQEILKALDFSLDGNINLTELTLALENELLV. The stretch at 358 to 570 forms a coiled coil; that stretch reads HQAALASFKA…YQAQGRVLRL (213 aa). GTP is bound at residue 420–423; that stretch reads RKLD. The interval 578–599 is disordered; it reads EELDGHSGGIEPDQGPGSEECN. 4 coiled-coil regions span residues 620–926, 958–1008, 1175–1323, and 1425–1806; these read RDLC…ESQH, EQLA…STEI, EDTR…MEKV, and AALL…IDKD. The interval 798 to 1495 is important for interaction with CEP170; that stretch reads EMETECNRRV…QDLQITCGEM (698 aa). Phosphoserine is present on residues Ser1540 and Ser1826. Coiled coils occupy residues 1852-1910 and 1971-2093; these read VQNT…KEQS and REQF…IASL. 2 disordered regions span residues 1899-1922 and 1988-2008; these read KREC…MGSL and SQHL…PQGN. Over residues 1988–1999 the composition is skewed to basic and acidic residues; the sequence is SQHLQEELENRT.

Homooligomer. Interacts with GSK3B/GSK3-beta via its C-terminal domain. Interacts with C14ORF166, such interaction may prevent its phosphorylation by GSK3B. Interacts with AUNIP (via N-terminus). Identified in a complex with AUNIP and AURKA. Interacts with CCDC120. Interacts (via C-terminus) with CEP250. Interacts with CEP170. Interacts (via N-terminus) with the gamma-tubulin ring complex component TUBGCP3. Interacts with gamma-tubulin. Isoform 4 does not interact with CEP170 or CEP250. In terms of processing, phosphorylated by AURKA/Aurora kinase A and PKA kinases but not CK2 or AURKB/Aurora kinase B. As to expression, widely expressed. Highly expressed in spleen, bone marrow and skin. Weakly expressed in liver and small intestine. Expressed in brain.

It is found in the cytoplasm. It localises to the cytoskeleton. The protein localises to the microtubule organizing center. Its subcellular location is the centrosome. The protein resides in the centriole. Its function is as follows. Centrosomal protein required for the positioning and anchorage of the microtubule minus-end in epithelial cells. May also act as a centrosome maturation factor. May play a role in microtubule nucleation, by recruiting the gamma-tubulin ring complex to the centrosome. Overexpression does not perturb nucleation or elongation of microtubules but suppresses release of microtubules. Required for centriole organization and microtubule anchoring at the mother centriole. The polypeptide is Ninein (Mus musculus (Mouse)).